Consider the following 137-residue polypeptide: FAD synthase (137 aa).

Residues 5-6, 10-13, and Asp-88 contribute to the ATP site; these read TF and HPGH.

It belongs to the archaeal FAD synthase family. In terms of assembly, homodimer. A divalent metal cation is required as a cofactor.

It carries out the reaction FMN + ATP + H(+) = FAD + diphosphate. It functions in the pathway cofactor biosynthesis; FAD biosynthesis; FAD from FMN: step 1/1. Its function is as follows. Catalyzes the transfer of the AMP portion of ATP to flavin mononucleotide (FMN) to produce flavin adenine dinucleotide (FAD) coenzyme. The sequence is that of FAD synthase from Archaeoglobus fulgidus (strain ATCC 49558 / DSM 4304 / JCM 9628 / NBRC 100126 / VC-16).